A 902-amino-acid chain; its full sequence is Respiratory burst oxidase homolog protein A (902 aa).

The Cytoplasmic portion of the chain corresponds to 1–344 (MMNRSEMQKL…KYFLFDNWKR (344 aa)). 2 disordered regions span residues 63–87 (KSPN…RSGR) and 107–130 (ASSV…RRSK). Over residues 74–87 (YEDQSLLRQGRSGR) the composition is skewed to polar residues. Low complexity predominate over residues 107-116 (ASSVSSSSAR). EF-hand-like regions lie at residues 163-173 (TMTTNGLLHRS) and 198-209 (ENVSGDSININE). EF-hand domains follow at residues 221–256 (DFDS…SASA) and 265–300 (QADE…APMQ). The Ca(2+) site is built by Asp-234, Asp-236, Asp-238, Arg-240, and Glu-245. Residues Ser-311 and Ser-315 each carry the phosphoserine modification. Residues 345–365 (VWVMALWIGAMAGLFTWKFME) form a helical membrane-spanning segment. The Extracellular portion of the chain corresponds to 366 to 380 (YRKRSAYEVMGVCVC). A helical transmembrane segment spans residues 381–401 (IAKGAAETLKLNMAMILLPVC). The 158-residue stretch at 383 to 540 (KGAAETLKLN…LFVIVYSLLV (158 aa)) folds into the Ferric oxidoreductase domain. At 402-428 (RNTITWLRTKTKLSAIVPFDDSLNFHK) the chain is on the cytoplasmic side. A helical transmembrane segment spans residues 429–449 (VIAIGISVGVGIHATSHLACD). Topologically, residues 450–484 (FPRLIAADEDQYEPMEKYFGPQTKRYLDFVQSVEG) are extracellular. Residues 485–505 (VTGIGMVVLMTIAFTLATTWF) traverse the membrane as a helical segment. Residues 506–529 (RRNKLNLPGPLKKITGFNAFWYSH) are Cytoplasmic-facing. A helical membrane pass occupies residues 530 to 550 (HLFVIVYSLLVVHGFYVYLII). Over 551-709 (EPWYKKTTWM…PAQDYKKFEV (159 aa)) the chain is Extracellular. In terms of domain architecture, FAD-binding FR-type spans 575 to 703 (IRAFRSSVEA…DGPYGAPAQD (129 aa)). A helical membrane pass occupies residues 710 to 730 (VLLVGLGIGATPMISIVSDII). The Cytoplasmic segment spans residues 731 to 902 (NNLKGVEEGS…TKFIFHKENF (172 aa)). The segment at 738–760 (EGSNRRQSPIHNMVTPPVSPSRK) is disordered.

This sequence belongs to the RBOH (TC 5.B.1.3) family. Monomer and homodimer.

Its subcellular location is the membrane. Its function is as follows. Calcium-dependent NADPH oxidase that generates superoxide. In Arabidopsis thaliana (Mouse-ear cress), this protein is Respiratory burst oxidase homolog protein A (RBOHA).